We begin with the raw amino-acid sequence, 162 residues long: Xylulose kinase (162 aa).

Residues 16–39 (GGHSATPRPATGPAGPAAHSGRHQ) are disordered. Residues 20–33 (ATPRPATGPAGPAA) show a composition bias toward low complexity.

The protein belongs to the FGGY kinase family.

The enzyme catalyses D-xylulose + ATP = D-xylulose 5-phosphate + ADP + H(+). Its function is as follows. Catalyzes the phosphorylation of D-xylulose to D-xylulose 5-phosphate. This is Xylulose kinase from Actinoplanes sp. (strain ATCC 31351 / 3876) (Ampullariella sp.).